We begin with the raw amino-acid sequence, 327 residues long: Phenylalanine--tRNA ligase alpha subunit (327 aa).

Glutamate 252 contacts Mg(2+).

Belongs to the class-II aminoacyl-tRNA synthetase family. Phe-tRNA synthetase alpha subunit type 1 subfamily. As to quaternary structure, tetramer of two alpha and two beta subunits. Mg(2+) serves as cofactor.

The protein localises to the cytoplasm. The catalysed reaction is tRNA(Phe) + L-phenylalanine + ATP = L-phenylalanyl-tRNA(Phe) + AMP + diphosphate + H(+). This Haemophilus ducreyi (strain 35000HP / ATCC 700724) protein is Phenylalanine--tRNA ligase alpha subunit.